A 331-amino-acid polypeptide reads, in one-letter code: UDP-GalNAc:beta-1,3-N-acetylgalactosaminyltransferase 1 (331 aa).

At 1-20 (MASALWTVLPSRMSLRSLKW) the chain is on the cytoplasmic side. Residues 21 to 43 (SLLLLSLLSFFVMWYLSLPHYNV) traverse the membrane as a helical; Signal-anchor for type II membrane protein segment. Over 44–331 (IERVNWMYFY…VMLRNTTCHY (288 aa)) the chain is Lumenal. 5 N-linked (GlcNAc...) asparagine glycosylation sites follow: N72, N154, N198, N212, and N326.

Belongs to the glycosyltransferase 31 family. It depends on Mg(2+) as a cofactor. As to expression, higher expression in heart and brain, and to a lesser extent in lung, placenta, kidney and testis. Lower expression in liver, spleen and stomach. No expression in skeletal muscle.

Its subcellular location is the golgi apparatus membrane. It carries out the reaction a globoside Gb3Cer (d18:1(4E)) + UDP-N-acetyl-alpha-D-galactosamine = a globoside Gb4Cer (d18:1(4E)) + UDP + H(+). It participates in protein modification; protein glycosylation. In terms of biological role, transfers N-acetylgalactosamine onto globotriaosylceramide. Plays a critical role in preimplantation stage embryonic development. This Homo sapiens (Human) protein is UDP-GalNAc:beta-1,3-N-acetylgalactosaminyltransferase 1.